The following is a 145-amino-acid chain: D-aminoacyl-tRNA deacylase (145 aa).

A Gly-cisPro motif, important for rejection of L-amino acids motif is present at residues Gly137–Pro138.

Belongs to the DTD family. Homodimer.

It is found in the cytoplasm. The enzyme catalyses glycyl-tRNA(Ala) + H2O = tRNA(Ala) + glycine + H(+). It carries out the reaction a D-aminoacyl-tRNA + H2O = a tRNA + a D-alpha-amino acid + H(+). In terms of biological role, an aminoacyl-tRNA editing enzyme that deacylates mischarged D-aminoacyl-tRNAs. Also deacylates mischarged glycyl-tRNA(Ala), protecting cells against glycine mischarging by AlaRS. Acts via tRNA-based rather than protein-based catalysis; rejects L-amino acids rather than detecting D-amino acids in the active site. By recycling D-aminoacyl-tRNA to D-amino acids and free tRNA molecules, this enzyme counteracts the toxicity associated with the formation of D-aminoacyl-tRNA entities in vivo and helps enforce protein L-homochirality. The sequence is that of D-aminoacyl-tRNA deacylase from Pseudomonas putida (strain ATCC 700007 / DSM 6899 / JCM 31910 / BCRC 17059 / LMG 24140 / F1).